A 214-amino-acid chain; its full sequence is Adenylate kinase (214 aa).

Position 10–15 (10–15) interacts with ATP; sequence GAGKGT. The interval 30–59 is NMP; the sequence is CTGDMLRAAVKAGSELGLKAKEIMDAGKLV. AMP contacts are provided by residues T31, R36, 57 to 59, 85 to 88, and Q92; these read KLV and GFPR. The LID stretch occupies residues 122-159; it reads GRRVHAASGRVYHIKFNPPKVEDKDDVTGEELTIRKDD. ATP contacts are provided by residues R123 and 132–133; that span reads VY. 2 residues coordinate AMP: R156 and R167. R200 lines the ATP pocket.

It belongs to the adenylate kinase family. In terms of assembly, monomer.

The protein localises to the cytoplasm. The catalysed reaction is AMP + ATP = 2 ADP. The protein operates within purine metabolism; AMP biosynthesis via salvage pathway; AMP from ADP: step 1/1. Catalyzes the reversible transfer of the terminal phosphate group between ATP and AMP. Plays an important role in cellular energy homeostasis and in adenine nucleotide metabolism. The sequence is that of Adenylate kinase from Yersinia enterocolitica.